We begin with the raw amino-acid sequence, 149 residues long: Large ribosomal subunit protein bL9 (149 aa).

It belongs to the bacterial ribosomal protein bL9 family.

Binds to the 23S rRNA. The polypeptide is Large ribosomal subunit protein bL9 (Haemophilus influenzae (strain PittGG)).